The following is an 88-amino-acid chain: uncharacterized protein (88 aa).

Positions 1-23 (MAVSGLRLTIVWGLLVLILTCQA) are cleaved as a signal peptide. Residues 25-40 (DKPEGKPDEQPHDSGK) are compositionally biased toward basic and acidic residues. Positions 25-45 (DKPEGKPDEQPHDSGKNSEPA) are disordered.

It localises to the secreted. This is an uncharacterized protein from Bos taurus (Bovine).